Reading from the N-terminus, the 256-residue chain is Large ribosomal subunit protein eL8y (256 aa).

Residues 1 to 15 show a composition bias toward basic residues; sequence MAPKKGVKVASKKKP. Positions 1–20 are disordered; sequence MAPKKGVKVASKKKPEKVTN.

This sequence belongs to the eukaryotic ribosomal protein eL8 family.

The chain is Large ribosomal subunit protein eL8y (RPL7AB) from Arabidopsis thaliana (Mouse-ear cress).